The chain runs to 295 residues: Probable dTDP-4,6-dihydroxy-2-methyloxan-3-one 4-ketoreductase (295 aa).

NADH is bound by residues 10 to 12, 36 to 37, 60 to 62, Y126, and K130; these read GML, DV, and AYT. NADPH is bound by residues 11–12, 36–37, 60–62, Y126, and K130; these read ML, DV, and AYT. Y126 acts as the Proton donor/acceptor in catalysis.

It belongs to the dTDP-4-dehydrorhamnose reductase family. Mg(2+) serves as cofactor.

Its pathway is antibiotic biosynthesis. Its function is as follows. Involved in the biosynthesis of one of the two 2,6-deoxysugars, dTDP-L-oleandrose, attached to the macrolactone ring oleandolide to produce the aglycone antibiotic oleandomycin. Probably catalyzes the reduction of dTDP-4-keto-2,6-dideoxy-beta-L-galactose to yield dTDP-L-olivose. The sequence is that of Probable dTDP-4,6-dihydroxy-2-methyloxan-3-one 4-ketoreductase from Streptomyces antibioticus.